A 607-amino-acid chain; its full sequence is MPRKKPFSVKQKKKQLQDKRERKRGLQDGLRSSSNSRSGSRERREEQTDTSDGESVTHHIRRLNQQPSQGLGPRGYDPNRYRLHFERDSREEVERRKRAAREQVLQPVSAEVLELDIREVYQPGSVLDFPRRPPWSYEMSKEQLMSQEERSFQDYLGKIHGAYSSEKLSYFEHNLETWRQLWRVLEMSDIVLLITDIRHPVVNFPPALYEYVTGELGLALVLVLNKVDLAPPALVVAWKHYFHQHYPQLHVVLFTSFPRDPRTPQDPSSVLKKSRRRGRGWTRALGPEQLLRACEAITVGKVDLSSWREKIARDVAGATWGNGSGEEEEEEDGPAVLVEQQTDSAMEPTGPTRERYKDGVVTIGCVGFPNVGKSSLINGLVGRKVVSVSRTPGHTRYFQTYFLTPSVKLCDCPGLIFPSLLPRQLQVLAGIYPIAQIQEPYTAVGYLASRIPVQALLHLRHPEAEDPSAEHPWCAWDICEAWAEKRGYKTAKAARNDVYRAANSLLRLAVDGRLSLCFHPPGYSEQKGTWESHPETTELVVLQGRVGPAGDEEEEEEEELSSSCEEEGEEDRDADEEGEGDEETPTSAPGSSLAGRNPYALLGEDEC.

The segment covering 1-14 (MPRKKPFSVKQKKK) has biased composition (basic residues). The segment at 1 to 81 (MPRKKPFSVK…GPRGYDPNRY (81 aa)) is disordered. Residues 15-26 (QLQDKRERKRGL) show a composition bias toward basic and acidic residues. Phosphoserine occurs at positions 32, 33, and 34. Thr-48 and Thr-50 each carry phosphothreonine. A phosphoserine mark is found at Ser-51 and Ser-68. Residues 178-418 (WRQLWRVLEM…LCDCPGLIFP (241 aa)) enclose the CP-type G domain. A GTP-binding site is contributed by 225 to 228 (NKVD). Ser-324 is modified (phosphoserine). GTP-binding positions include 367–374 (GFPNVGKS) and 411–415 (DCPGL). The segment at 547 to 607 (GPAGDEEEEE…PYALLGEDEC (61 aa)) is disordered. Acidic residues predominate over residues 550–584 (GDEEEEEEEELSSSCEEEGEEDRDADEEGEGDEET). 3 positions are modified to phosphoserine: Ser-561, Ser-562, and Ser-563.

This sequence belongs to the TRAFAC class YlqF/YawG GTPase family.

Possible regulatory or functional link with the histocompatibility cluster. This is Guanine nucleotide-binding protein-like 1 (GNL1) from Pan troglodytes (Chimpanzee).